The following is a 595-amino-acid chain: Flap endonuclease 1 (595 aa).

The tract at residues 1-106 is N-domain; it reads MGIKGLTKFI…SELEKRGEKR (106 aa). D34 provides a ligand contact to Mg(2+). R47 and R72 together coordinate DNA. D88, E160, E162, D181, and D183 together coordinate Mg(2+). The segment at 124–267 is I-domain; it reads EIKKQSGRTV…KTAYNLIKEY (144 aa). E160 provides a ligand contact to DNA. Residues G245 and D247 each coordinate DNA. Mg(2+) is bound at residue D247. The interval 350–358 is interaction with PCNA; it reads TQRRLDNFF. Positions 370–493 are disordered; the sequence is NEESQIKKEV…TGDVYSFPNG (124 aa). The segment covering 392-401 has biased composition (polar residues); that stretch reads NDSSTKLNSK. A compositionally biased stretch (basic and acidic residues) spans 406-425; the sequence is PKGEKESKTEKDDGDTHNGN. Over residues 426-436 the composition is skewed to acidic residues; the sequence is DNEEEGGEGET. The segment covering 461 to 475 has biased composition (basic and acidic residues); it reads HKSDSESGNVKKEST.

This sequence belongs to the XPG/RAD2 endonuclease family. FEN1 subfamily. As to quaternary structure, interacts with PCNA. Three molecules of FEN1 bind to one PCNA trimer with each molecule binding to one PCNA monomer. PCNA stimulates the nuclease activity without altering cleavage specificity. Requires Mg(2+) as cofactor. Post-translationally, phosphorylated. Phosphorylation upon DNA damage induces relocalization to the nuclear plasma.

Its subcellular location is the nucleus. The protein resides in the nucleolus. It localises to the nucleoplasm. The protein localises to the mitochondrion. Functionally, structure-specific nuclease with 5'-flap endonuclease and 5'-3' exonuclease activities involved in DNA replication and repair. During DNA replication, cleaves the 5'-overhanging flap structure that is generated by displacement synthesis when DNA polymerase encounters the 5'-end of a downstream Okazaki fragment. It enters the flap from the 5'-end and then tracks to cleave the flap base, leaving a nick for ligation. Also involved in the long patch base excision repair (LP-BER) pathway, by cleaving within the apurinic/apyrimidinic (AP) site-terminated flap. Acts as a genome stabilization factor that prevents flaps from equilibrating into structures that lead to duplications and deletions. Also possesses 5'-3' exonuclease activity on nicked or gapped double-stranded DNA, and exhibits RNase H activity. Also involved in replication and repair of rDNA and in repairing mitochondrial DNA. This is Flap endonuclease 1 from Plasmodium knowlesi (strain H).